We begin with the raw amino-acid sequence, 206 residues long: MPAAPLTARAIGRIKPLLFVAGLLPFARWFWLGANDGLSANPVEFLTRSSGTWTLVCLLVTLAITPLRRLTGQPALVRLRRMCGLFAFFYGSLHFLAWVWWDRGLDPVSMLQDVGERPFITVGFAAFVLMAALAATSTQWAMRKLGKRWQTLHRAVYAIGLLAILHFWWHKAGKNDLQQPLLYGSVLALLLGWRVAAWWRRRGAAR.

6 helical membrane-spanning segments follow: residues 14 to 34 (IKPLLFVAGLLPFARWFWLGA), 45 to 65 (FLTRSSGTWTLVCLLVTLAIT), 82 to 102 (MCGLFAFFYGSLHFLAWVWWD), 118 to 138 (PFITVGFAAFVLMAALAATST), 149 to 169 (WQTLHRAVYAIGLLAILHFWW), and 179 to 199 (QPLLYGSVLALLLGWRVAAWW).

It belongs to the MsrQ family. Heterodimer of a catalytic subunit (MsrP) and a heme-binding subunit (MsrQ). Requires FMN as cofactor. The cofactor is heme b.

Its subcellular location is the cell inner membrane. In terms of biological role, part of the MsrPQ system that repairs oxidized periplasmic proteins containing methionine sulfoxide residues (Met-O), using respiratory chain electrons. Thus protects these proteins from oxidative-stress damage caused by reactive species of oxygen and chlorine generated by the host defense mechanisms. MsrPQ is essential for the maintenance of envelope integrity under bleach stress, rescuing a wide series of structurally unrelated periplasmic proteins from methionine oxidation. MsrQ provides electrons for reduction to the reductase catalytic subunit MsrP, using the quinone pool of the respiratory chain. This is Protein-methionine-sulfoxide reductase heme-binding subunit MsrQ from Bordetella pertussis (strain Tohama I / ATCC BAA-589 / NCTC 13251).